Consider the following 215-residue polypeptide: Adenylate kinase (215 aa).

Residue 10–15 participates in ATP binding; that stretch reads GAGKGT. The tract at residues 30–59 is NMP; the sequence is STGDMFRLAIKEGTELGKKAKEFMDQGDLV. AMP contacts are provided by residues Thr-31, Arg-36, 57-59, 85-88, and Gln-92; these read DLV and GFPR. Residues 126-163 form an LID region; that stretch reads GRRICPTCGTAYHVVYNPPKEEGICDKDGSQLIQRDDD. Arg-127 is an ATP binding site. Cys-130, Cys-133, Cys-150, and Asp-153 together coordinate Zn(2+). AMP-binding residues include Arg-160 and Arg-171. Arg-199 lines the ATP pocket.

This sequence belongs to the adenylate kinase family. In terms of assembly, monomer.

The protein localises to the cytoplasm. The enzyme catalyses AMP + ATP = 2 ADP. The protein operates within purine metabolism; AMP biosynthesis via salvage pathway; AMP from ADP: step 1/1. Functionally, catalyzes the reversible transfer of the terminal phosphate group between ATP and AMP. Plays an important role in cellular energy homeostasis and in adenine nucleotide metabolism. The sequence is that of Adenylate kinase from Oceanobacillus iheyensis (strain DSM 14371 / CIP 107618 / JCM 11309 / KCTC 3954 / HTE831).